The chain runs to 243 residues: MSIERITYDNFQNDPFINELDINDETKGAYEILKWAYQTYENDIVYSCSFGAESMVLIDLISQIKPDAQIVFLDTDLHFQETYDLIDRVKDKYPQLRIKMKKPELTLEEQGEKYNPALWKNDPNQCCYIRKIKPLEDVLSGAVAWISGLRRAQSPTRAHTNFINKDERFKSIKVCPLIYWTEEEVWSYIRDKDLPYNELHDQNYPSIGCIPCTSPVFDSNDSRAGRWSNSSKTECGLHVTDKP.

4 residues coordinate [4Fe-4S] cluster: Cys-126, Cys-127, Cys-209, and Cys-212. The active-site Nucleophile; cysteine thiosulfonate intermediate is Cys-235.

This sequence belongs to the PAPS reductase family. CysH subfamily. It depends on [4Fe-4S] cluster as a cofactor.

Its subcellular location is the cytoplasm. It carries out the reaction [thioredoxin]-disulfide + sulfite + AMP + 2 H(+) = adenosine 5'-phosphosulfate + [thioredoxin]-dithiol. The protein operates within sulfur metabolism; hydrogen sulfide biosynthesis; sulfite from sulfate. Catalyzes the formation of sulfite from adenosine 5'-phosphosulfate (APS) using thioredoxin as an electron donor. The chain is Adenosine 5'-phosphosulfate reductase from Staphylococcus epidermidis (strain ATCC 35984 / DSM 28319 / BCRC 17069 / CCUG 31568 / BM 3577 / RP62A).